Consider the following 183-residue polypeptide: Der GTPase-activating protein YihI (183 aa).

The disordered stretch occupies residues Met1–Lys101. Basic and acidic residues-rich tracts occupy residues Lys22–Glu46 and Lys92–Lys101.

This sequence belongs to the YihI family. In terms of assembly, interacts with Der.

Functionally, a GTPase-activating protein (GAP) that modifies Der/EngA GTPase function. May play a role in ribosome biogenesis. The protein is Der GTPase-activating protein YihI of Shewanella oneidensis (strain ATCC 700550 / JCM 31522 / CIP 106686 / LMG 19005 / NCIMB 14063 / MR-1).